The sequence spans 422 residues: Enolase (422 aa).

A (2R)-2-phosphoglycerate-binding site is contributed by glutamine 162. Catalysis depends on glutamate 204, which acts as the Proton donor. 3 residues coordinate Mg(2+): aspartate 241, glutamate 285, and aspartate 312. The (2R)-2-phosphoglycerate site is built by lysine 337, arginine 366, serine 367, and lysine 388. Lysine 337 functions as the Proton acceptor in the catalytic mechanism.

Belongs to the enolase family. Mg(2+) is required as a cofactor.

Its subcellular location is the cytoplasm. The protein resides in the secreted. It is found in the cell surface. The catalysed reaction is (2R)-2-phosphoglycerate = phosphoenolpyruvate + H2O. It functions in the pathway carbohydrate degradation; glycolysis; pyruvate from D-glyceraldehyde 3-phosphate: step 4/5. In terms of biological role, catalyzes the reversible conversion of 2-phosphoglycerate (2-PG) into phosphoenolpyruvate (PEP). It is essential for the degradation of carbohydrates via glycolysis. The sequence is that of Enolase from Wolinella succinogenes (strain ATCC 29543 / DSM 1740 / CCUG 13145 / JCM 31913 / LMG 7466 / NCTC 11488 / FDC 602W) (Vibrio succinogenes).